Consider the following 175-residue polypeptide: Sialidase 85-1.3 (175 aa).

This sequence belongs to the glycosyl hydrolase 33 family.

The catalysed reaction is Hydrolysis of alpha-(2-&gt;3)-, alpha-(2-&gt;6)-, alpha-(2-&gt;8)- glycosidic linkages of terminal sialic acid residues in oligosaccharides, glycoproteins, glycolipids, colominic acid and synthetic substrates.. In terms of biological role, developmentally regulated neuraminidase implicated in parasite invasion of cells. May contribute to the pathology during T.cruzi infection by cleaving sialic acid from cells of the immune system. The polypeptide is Sialidase 85-1.3 (SA85-1.3) (Trypanosoma cruzi).